Here is a 131-residue protein sequence, read N- to C-terminus: Holo-[acyl-carrier-protein] synthase (131 aa).

Asp8 and Glu63 together coordinate Mg(2+).

The protein belongs to the P-Pant transferase superfamily. AcpS family. The cofactor is Mg(2+).

It localises to the cytoplasm. It carries out the reaction apo-[ACP] + CoA = holo-[ACP] + adenosine 3',5'-bisphosphate + H(+). Transfers the 4'-phosphopantetheine moiety from coenzyme A to a Ser of acyl-carrier-protein. The polypeptide is Holo-[acyl-carrier-protein] synthase (Shewanella pealeana (strain ATCC 700345 / ANG-SQ1)).